A 418-amino-acid polypeptide reads, in one-letter code: Gamma-glutamyl phosphate reductase (418 aa).

A compositionally biased stretch (basic and acidic residues) spans 1–18 (MAIQDEMRQVAEGAREAS). Residues 1-22 (MAIQDEMRQVAEGAREASRTLS) are disordered.

It belongs to the gamma-glutamyl phosphate reductase family.

Its subcellular location is the cytoplasm. It catalyses the reaction L-glutamate 5-semialdehyde + phosphate + NADP(+) = L-glutamyl 5-phosphate + NADPH + H(+). Its pathway is amino-acid biosynthesis; L-proline biosynthesis; L-glutamate 5-semialdehyde from L-glutamate: step 2/2. Catalyzes the NADPH-dependent reduction of L-glutamate 5-phosphate into L-glutamate 5-semialdehyde and phosphate. The product spontaneously undergoes cyclization to form 1-pyrroline-5-carboxylate. The polypeptide is Gamma-glutamyl phosphate reductase (Syntrophus aciditrophicus (strain SB)).